The primary structure comprises 307 residues: D-alanine--D-alanine ligase (307 aa).

The ATP-grasp domain maps to K108–E301. Residue L135 to T185 coordinates ATP. D252, E268, and N270 together coordinate Mg(2+).

Belongs to the D-alanine--D-alanine ligase family. Requires Mg(2+) as cofactor. The cofactor is Mn(2+).

It localises to the cytoplasm. It catalyses the reaction 2 D-alanine + ATP = D-alanyl-D-alanine + ADP + phosphate + H(+). Its pathway is cell wall biogenesis; peptidoglycan biosynthesis. Its function is as follows. Cell wall formation. This chain is D-alanine--D-alanine ligase, found in Cereibacter sphaeroides (strain ATCC 17029 / ATH 2.4.9) (Rhodobacter sphaeroides).